The primary structure comprises 319 residues: tRNA pseudouridine synthase B (319 aa).

Asp-49 functions as the Nucleophile in the catalytic mechanism.

This sequence belongs to the pseudouridine synthase TruB family. Type 1 subfamily.

It carries out the reaction uridine(55) in tRNA = pseudouridine(55) in tRNA. Its function is as follows. Responsible for synthesis of pseudouridine from uracil-55 in the psi GC loop of transfer RNAs. The polypeptide is tRNA pseudouridine synthase B (Aeromonas salmonicida (strain A449)).